Reading from the N-terminus, the 1893-residue chain is Serine-aspartate repeat-containing protein I (1893 aa).

Residues 1–54 (MNFKGVKLLKNSKKRLDFLPNTLNKYSIRKFTVGTASILVGATLFLGVSNEAEA) form the signal peptide. Positions 53 to 333 (EAAEKIDSPT…AHGINNKNKQ (281 aa)) are disordered. Residues 54–222 (AAEKIDSPTK…AEEPATKEEA (169 aa)) are compositionally biased toward basic and acidic residues. Tandem repeats lie at residues 72–83 (AATKEEAATTEE), 84–95 (PATKEEAATTEE), 96–107 (PATKEEAAIAEE), 108–119 (PATKEEAATTEE), 120–131 (PATKEEAAIAEE), 132–143 (PATKEEAATTEE), 144–155 (PATKEEAATTEE), 156–167 (PATKEEAAIAEE), 168–179 (PATKEEAATTEE), 180–191 (PATKEEAAIAEE), 192–203 (PATKEEAVTSEE), 204–215 (AATKEKAAIAEE), 216–227 (PATKEEAAIAEE), 228–239 (PETKEEAATTEE), 240–251 (PATKEEAAIAEE), 252–263 (AATKEKAVTSEE), 264–275 (AATKEKAAIAEE), 276–287 (AATKEKAAIAEE), 288–299 (PETKEEAATTEE), 300–311 (PETKEEAAIAEE), and 312–323 (PATKEKAVTSEE). The tract at residues 72 to 323 (AATKEEAATT…TKEKAVTSEE (252 aa)) is 21 X 12 AA tandem repeat of [AP]-[AE]-T-K-E-[EK]-A-[AV]-[IT]-[AST]-E-E. The span at 240–284 (PATKEEAAIAEEAATKEKAVTSEEAATKEKAAIAEEAATKEKAAI) shows a compositional bias: basic and acidic residues. Residues 286–302 (EEPETKEEAATTEEPET) are compositionally biased toward acidic residues. A compositionally biased stretch (basic and acidic residues) spans 312 to 325 (PATKEKAVTSEEAH). The ligand binding A region stretch occupies residues 324 to 755 (AHGINNKNKQ…GSSTAQGDNP (432 aa)). CNA-B domains lie at 756–874 (TYNL…YETP) and 875–984 (KYSL…YFDE). Positions 941–1867 (KPEGLTQTTT…GNNTQNNGTL (927 aa)) are disordered. The span at 955–975 (DENKDADGEEVHVTITDHDDF) shows a compositional bias: basic and acidic residues. A compositionally biased stretch (acidic residues) spans 981–1836 (YFDEDSDADA…DSDADADADS (856 aa)). Over residues 1837–1851 (DADKYHNDTADKSND) the composition is skewed to basic and acidic residues. Positions 1854–1858 (LPDTG) match the LPXTG sorting signal motif. Threonine 1857 carries the pentaglycyl murein peptidoglycan amidated threonine modification. Positions 1858–1893 (GNNTQNNGTLFGSLFAALGGLFLVGSRRKNKNNEEK) are cleaved as a propeptide — removed by sortase.

It belongs to the serine-aspartate repeat-containing protein (SDr) family.

It is found in the secreted. The protein resides in the cell wall. Its function is as follows. Responsible for collagen binding by S.saprophyticus. The sequence is that of Serine-aspartate repeat-containing protein I (sdrI) from Staphylococcus saprophyticus.